The following is a 308-amino-acid chain: 4-hydroxy-3-methylbut-2-enyl diphosphate reductase 2 (308 aa).

Cys12 lines the [4Fe-4S] cluster pocket. Residues His41 and His74 each contribute to the (2E)-4-hydroxy-3-methylbut-2-enyl diphosphate site. Dimethylallyl diphosphate-binding residues include His41 and His74. Residues His41 and His74 each contribute to the isopentenyl diphosphate site. Cys96 contacts [4Fe-4S] cluster. (2E)-4-hydroxy-3-methylbut-2-enyl diphosphate is bound at residue His124. Residue His124 participates in dimethylallyl diphosphate binding. His124 provides a ligand contact to isopentenyl diphosphate. Glu126 serves as the catalytic Proton donor. Position 164 (Thr164) interacts with (2E)-4-hydroxy-3-methylbut-2-enyl diphosphate. Cys194 contacts [4Fe-4S] cluster. The (2E)-4-hydroxy-3-methylbut-2-enyl diphosphate site is built by Ser222, Ser223, Asn224, and Ser266. Dimethylallyl diphosphate-binding residues include Ser222, Ser223, Asn224, and Ser266. Isopentenyl diphosphate-binding residues include Ser222, Ser223, Asn224, and Ser266.

Belongs to the IspH family. It depends on [4Fe-4S] cluster as a cofactor.

The enzyme catalyses isopentenyl diphosphate + 2 oxidized [2Fe-2S]-[ferredoxin] + H2O = (2E)-4-hydroxy-3-methylbut-2-enyl diphosphate + 2 reduced [2Fe-2S]-[ferredoxin] + 2 H(+). It catalyses the reaction dimethylallyl diphosphate + 2 oxidized [2Fe-2S]-[ferredoxin] + H2O = (2E)-4-hydroxy-3-methylbut-2-enyl diphosphate + 2 reduced [2Fe-2S]-[ferredoxin] + 2 H(+). It functions in the pathway isoprenoid biosynthesis; dimethylallyl diphosphate biosynthesis; dimethylallyl diphosphate from (2E)-4-hydroxy-3-methylbutenyl diphosphate: step 1/1. Its pathway is isoprenoid biosynthesis; isopentenyl diphosphate biosynthesis via DXP pathway; isopentenyl diphosphate from 1-deoxy-D-xylulose 5-phosphate: step 6/6. Its function is as follows. Catalyzes the conversion of 1-hydroxy-2-methyl-2-(E)-butenyl 4-diphosphate (HMBPP) into a mixture of isopentenyl diphosphate (IPP) and dimethylallyl diphosphate (DMAPP). Acts in the terminal step of the DOXP/MEP pathway for isoprenoid precursor biosynthesis. In Bradyrhizobium diazoefficiens (strain JCM 10833 / BCRC 13528 / IAM 13628 / NBRC 14792 / USDA 110), this protein is 4-hydroxy-3-methylbut-2-enyl diphosphate reductase 2.